We begin with the raw amino-acid sequence, 209 residues long: High frequency lysogenization protein HflD homolog (209 aa).

It belongs to the HflD family.

The protein resides in the cytoplasm. The protein localises to the cell inner membrane. This is High frequency lysogenization protein HflD homolog from Proteus mirabilis (strain HI4320).